A 151-amino-acid polypeptide reads, in one-letter code: MKCPYCGYIEDRVIDSRPTDEGSAIRRRRECSKCLKRFTTYEKVESLPIMVIKKDKSRQAFDREKLLNGILRACEKRPVSIEQLEKLVDDIESQIHNSLQREVTSKDIGEMVMAKLKNLDEVAYVRFASVYRQFKDINTFMDELRKLLNEK.

The segment at 3–34 is a zinc-finger region; the sequence is CPYCGYIEDRVIDSRPTDEGSAIRRRRECSKC. An ATP-cone domain is found at 49-139; it reads IMVIKKDKSR…VYRQFKDINT (91 aa).

It belongs to the NrdR family. Zn(2+) serves as cofactor.

Negatively regulates transcription of bacterial ribonucleotide reductase nrd genes and operons by binding to NrdR-boxes. This is Transcriptional repressor NrdR from Acetivibrio thermocellus (strain ATCC 27405 / DSM 1237 / JCM 9322 / NBRC 103400 / NCIMB 10682 / NRRL B-4536 / VPI 7372) (Clostridium thermocellum).